The sequence spans 269 residues: Tryptophan synthase alpha chain (269 aa).

Residues Glu-49 and Asp-60 each act as proton acceptor in the active site.

It belongs to the TrpA family. Tetramer of two alpha and two beta chains.

The enzyme catalyses (1S,2R)-1-C-(indol-3-yl)glycerol 3-phosphate + L-serine = D-glyceraldehyde 3-phosphate + L-tryptophan + H2O. It participates in amino-acid biosynthesis; L-tryptophan biosynthesis; L-tryptophan from chorismate: step 5/5. Functionally, the alpha subunit is responsible for the aldol cleavage of indoleglycerol phosphate to indole and glyceraldehyde 3-phosphate. The sequence is that of Tryptophan synthase alpha chain from Pseudomonas putida (Arthrobacter siderocapsulatus).